The following is a 265-amino-acid chain: Phosphate import ATP-binding protein PstB (265 aa).

The region spanning 18–260 (MECRDCHVYY…PEDPRTESYI (243 aa)) is the ABC transporter domain. 50–57 (GPSGCGKS) provides a ligand contact to ATP.

This sequence belongs to the ABC transporter superfamily. Phosphate importer (TC 3.A.1.7) family. The complex is composed of two ATP-binding proteins (PstB), two transmembrane proteins (PstC and PstA) and a solute-binding protein (PstS).

The protein resides in the cell inner membrane. It catalyses the reaction phosphate(out) + ATP + H2O = ADP + 2 phosphate(in) + H(+). Its function is as follows. Part of the ABC transporter complex PstSACB involved in phosphate import. Responsible for energy coupling to the transport system. This Ruegeria pomeroyi (strain ATCC 700808 / DSM 15171 / DSS-3) (Silicibacter pomeroyi) protein is Phosphate import ATP-binding protein PstB.